Consider the following 121-residue polypeptide: Small ribosomal subunit protein uS13 (121 aa).

A disordered region spans residues 94–121; the sequence is GLPVRGQRTRTNARTRKGPRKGAAALKK.

It belongs to the universal ribosomal protein uS13 family. Part of the 30S ribosomal subunit. Forms a loose heterodimer with protein S19. Forms two bridges to the 50S subunit in the 70S ribosome.

In terms of biological role, located at the top of the head of the 30S subunit, it contacts several helices of the 16S rRNA. In the 70S ribosome it contacts the 23S rRNA (bridge B1a) and protein L5 of the 50S subunit (bridge B1b), connecting the 2 subunits; these bridges are implicated in subunit movement. Contacts the tRNAs in the A and P-sites. This chain is Small ribosomal subunit protein uS13, found in Verminephrobacter eiseniae (strain EF01-2).